A 275-amino-acid chain; its full sequence is MRPPFPGTPDSSKKSANLTVKLETQAVSVYYGSHLAVKQVSLKIPKNHITAFIGPSGCGKSTLLRCFNRMNDLIPGARVEGSVIFHGKNIYDPDVDPAEVRRRVGLVFQKPNPFPKSIYDNIAFGPRVNGYQGDLDELVERALRQAVLWDEVKDKLKTSGLSLSGGQQQRLCIARTLAIQPEVILMDEPCASLDPISTLRIEELLKELGRRYTIIIVTHNMQQAARVSDFTAFFNTEVDEEGFRYGRLVEFNRTEKIFNSPAHRETEEYVSGRFG.

The ABC transporter domain occupies 22–261 (LETQAVSVYY…NRTEKIFNSP (240 aa)). Position 54–61 (54–61 (GPSGCGKS)) interacts with ATP.

The protein belongs to the ABC transporter superfamily. Phosphate importer (TC 3.A.1.7) family. As to quaternary structure, the complex is composed of two ATP-binding proteins (PstB), two transmembrane proteins (PstC and PstA) and a solute-binding protein (PstS).

The protein resides in the cell inner membrane. It catalyses the reaction phosphate(out) + ATP + H2O = ADP + 2 phosphate(in) + H(+). Its function is as follows. Part of the ABC transporter complex PstSACB involved in phosphate import. Responsible for energy coupling to the transport system. The chain is Phosphate import ATP-binding protein PstB 1 from Synechococcus sp. (strain JA-2-3B'a(2-13)) (Cyanobacteria bacterium Yellowstone B-Prime).